We begin with the raw amino-acid sequence, 203 residues long: Small ribosomal subunit protein uS4 (203 aa).

In terms of domain architecture, S4 RNA-binding spans 93–154; that stretch reads RRFDNVVYRC…KSRNLDAVAD (62 aa).

It belongs to the universal ribosomal protein uS4 family. Part of the 30S ribosomal subunit. Contacts protein S5. The interaction surface between S4 and S5 is involved in control of translational fidelity.

Functionally, one of the primary rRNA binding proteins, it binds directly to 16S rRNA where it nucleates assembly of the body of the 30S subunit. With S5 and S12 plays an important role in translational accuracy. The polypeptide is Small ribosomal subunit protein uS4 (Chlorobaculum parvum (strain DSM 263 / NCIMB 8327) (Chlorobium vibrioforme subsp. thiosulfatophilum)).